Consider the following 263-residue polypeptide: Probable ABC transporter permease protein ycf63 (263 aa).

Helical transmembrane passes span 43 to 63 (LVGPGSLNITLLTACFISMVF), 82 to 102 (AVIVIAFTRELSPVLTAVIIA), 136 to 156 (LVFPKVAACCIMLPILSTISL), 159 to 179 (SIAISIFVSFVMYGIPSSIFL), 199 to 219 (LCFGTIIAFISCQWGLTSSGG), and 230 to 250 (SVVTILLTIFITDFILSYFMF).

This sequence belongs to the MlaE permease family.

The protein resides in the plastid. It localises to the chloroplast membrane. Functionally, could be part of an ABC transporter complex. This chain is Probable ABC transporter permease protein ycf63 (ycf63), found in Porphyra purpurea (Red seaweed).